The following is a 142-amino-acid chain: Ribosome-binding factor A (142 aa).

Residues 123-142 (VQRDLDSAPEDDEPETGTGH) are disordered. The segment covering 129-142 (SAPEDDEPETGTGH) has biased composition (acidic residues).

It belongs to the RbfA family. As to quaternary structure, monomer. Binds 30S ribosomal subunits, but not 50S ribosomal subunits or 70S ribosomes.

The protein resides in the cytoplasm. One of several proteins that assist in the late maturation steps of the functional core of the 30S ribosomal subunit. Associates with free 30S ribosomal subunits (but not with 30S subunits that are part of 70S ribosomes or polysomes). Required for efficient processing of 16S rRNA. May interact with the 5'-terminal helix region of 16S rRNA. The protein is Ribosome-binding factor A of Methylobacterium radiotolerans (strain ATCC 27329 / DSM 1819 / JCM 2831 / NBRC 15690 / NCIMB 10815 / 0-1).